A 519-amino-acid polypeptide reads, in one-letter code: Spermidine/putrescine import ATP-binding protein PotA (519 aa).

In terms of domain architecture, ABC transporter spans 6–401; it reads LHLRDITKIY…PNSLWVANFI (396 aa). ATP is bound at residue 39 to 46; that stretch reads GPSGCGKT. The segment at 107 to 270 is insert; the sequence is RKPKDNVDQS…EQFENKNITR (164 aa).

It belongs to the ABC transporter superfamily. Spermidine/putrescine importer (TC 3.A.1.11.1) family. The complex is composed of two ATP-binding proteins (PotA), two transmembrane proteins (PotB and PotC) and a solute-binding protein (PotD).

The protein resides in the cell membrane. It catalyses the reaction ATP + H2O + polyamine-[polyamine-binding protein]Side 1 = ADP + phosphate + polyamineSide 2 + [polyamine-binding protein]Side 1.. Functionally, part of the ABC transporter complex PotABCD involved in spermidine/putrescine import. Responsible for energy coupling to the transport system. The protein is Spermidine/putrescine import ATP-binding protein PotA of Ureaplasma parvum serovar 3 (strain ATCC 700970).